Here is a 96-residue protein sequence, read N- to C-terminus: Small cysteine and glycine repeat-containing protein 7 (96 aa).

Positions 4-80 are 14 X 2 AA repeats of CG; that stretch reads CGCGSCGGCG…TCGSCGCGCG (77 aa).

It belongs to the KRTAP type 28 family.

Functionally, in the hair cortex, hair keratin intermediate filaments are embedded in an interfilamentous matrix, consisting of hair keratin-associated proteins (KRTAP), which are essential for the formation of a rigid and resistant hair shaft through their extensive disulfide bond cross-linking with abundant cysteine residues of hair keratins. The matrix proteins include the high-sulfur and high-glycine-tyrosine keratins. The chain is Small cysteine and glycine repeat-containing protein 7 from Homo sapiens (Human).